A 495-amino-acid polypeptide reads, in one-letter code: Cytochrome P450 710A1 (495 aa).

Residues 5 to 25 traverse the membrane as a helical segment; sequence VSIFASLAPYLISAFLLFLLV. Cysteine 434 lines the heme pocket.

It belongs to the cytochrome P450 family. It depends on heme as a cofactor. As to expression, expressed in the vascular tissues of roots, shoots and leaves. Expressed in root tips and sepals. Very low expression in stems and siliques.

The protein resides in the membrane. It catalyses the reaction 5-dehydroepisterol + NADPH + O2 + H(+) = ergosta-5,7,22,24(28)-tetraen-3beta-ol + NADP(+) + 2 H2O. It functions in the pathway steroid biosynthesis; sterol biosynthesis. Required to form the C-22 double bond in the sterol side chain. Possesses in vitro C-22 desaturase activity toward beta-sitosterol and produces stigmasterol. No activity with campesterol. In Arabidopsis thaliana (Mouse-ear cress), this protein is Cytochrome P450 710A1.